We begin with the raw amino-acid sequence, 116 residues long: uncharacterized protein (116 aa).

This is an uncharacterized protein from Saccharolobus islandicus (Sulfolobus islandicus).